The chain runs to 147 residues: Ubiquitin-conjugating enzyme E2-16 kDa (147 aa).

Positions 1 to 147 constitute a UBC core domain; that stretch reads MALKRINKEL…AREWTRKYAI (147 aa). Cysteine 107 functions as the Glycyl thioester intermediate in the catalytic mechanism.

The protein belongs to the ubiquitin-conjugating enzyme family.

It catalyses the reaction S-ubiquitinyl-[E1 ubiquitin-activating enzyme]-L-cysteine + [E2 ubiquitin-conjugating enzyme]-L-cysteine = [E1 ubiquitin-activating enzyme]-L-cysteine + S-ubiquitinyl-[E2 ubiquitin-conjugating enzyme]-L-cysteine.. The protein operates within protein modification; protein ubiquitination. Functionally, catalyzes the covalent attachment of ubiquitin to other proteins. The protein is Ubiquitin-conjugating enzyme E2-16 kDa (UBC1) of Pyricularia oryzae (strain 70-15 / ATCC MYA-4617 / FGSC 8958) (Rice blast fungus).